Reading from the N-terminus, the 437-residue chain is Protein farnesyltransferase subunit beta (437 aa).

PFTB repeat units follow at residues 123–164, 174–215, 222–263, 270–312, and 332–374; these read ATDV…CIIG, REKL…SLTN, FEGT…VILK, LKSL…PLLH, and QQAL…SIAQ. Residues 248-251 and 291-294 contribute to the (2E,6E)-farnesyl diphosphate site; these read HGGY and RCNK. Aspartate 297 and cysteine 299 together coordinate Zn(2+). Residue 300-303 participates in (2E,6E)-farnesyl diphosphate binding; it reads YSFW. Histidine 362 provides a ligand contact to Zn(2+). Phosphothreonine is present on threonine 436.

The protein belongs to the protein prenyltransferase subunit beta family. Heterodimer of FNTA and FNTB. Requires Zn(2+) as cofactor.

It carries out the reaction L-cysteinyl-[protein] + (2E,6E)-farnesyl diphosphate = S-(2E,6E)-farnesyl-L-cysteinyl-[protein] + diphosphate. Functionally, essential subunit of the farnesyltransferase complex. Catalyzes the transfer of a farnesyl moiety from farnesyl diphosphate to a cysteine at the fourth position from the C-terminus of several proteins having the C-terminal sequence Cys-aliphatic-aliphatic-X. The chain is Protein farnesyltransferase subunit beta (FNTB) from Bos taurus (Bovine).